The chain runs to 299 residues: Bifunctional protein FolD 1 (299 aa).

Residues 168–170, S193, and I234 each bind NADP(+); that span reads GRS.

It belongs to the tetrahydrofolate dehydrogenase/cyclohydrolase family. In terms of assembly, homodimer.

It carries out the reaction (6R)-5,10-methylene-5,6,7,8-tetrahydrofolate + NADP(+) = (6R)-5,10-methenyltetrahydrofolate + NADPH. It catalyses the reaction (6R)-5,10-methenyltetrahydrofolate + H2O = (6R)-10-formyltetrahydrofolate + H(+). The protein operates within one-carbon metabolism; tetrahydrofolate interconversion. In terms of biological role, catalyzes the oxidation of 5,10-methylenetetrahydrofolate to 5,10-methenyltetrahydrofolate and then the hydrolysis of 5,10-methenyltetrahydrofolate to 10-formyltetrahydrofolate. The sequence is that of Bifunctional protein FolD 1 from Rhizobium etli (strain ATCC 51251 / DSM 11541 / JCM 21823 / NBRC 15573 / CFN 42).